The primary structure comprises 306 residues: S-methyl-5'-thioadenosine phosphorylase (306 aa).

Residues T21, 63 to 64, and 96 to 97 contribute to the phosphate site; these read RH and SA. M198 lines the substrate pocket. Phosphate is bound at residue S199. Residue 222–224 participates in substrate binding; the sequence is DYD.

The protein belongs to the PNP/MTAP phosphorylase family. MTAP subfamily. Homotrimer.

It is found in the cytoplasm. The protein resides in the nucleus. The enzyme catalyses S-methyl-5'-thioadenosine + phosphate = 5-(methylsulfanyl)-alpha-D-ribose 1-phosphate + adenine. It participates in amino-acid biosynthesis; L-methionine biosynthesis via salvage pathway; S-methyl-5-thio-alpha-D-ribose 1-phosphate from S-methyl-5'-thioadenosine (phosphorylase route): step 1/1. Its function is as follows. Catalyzes the reversible phosphorylation of S-methyl-5'-thioadenosine (MTA) to adenine and 5-methylthioribose-1-phosphate. Involved in the breakdown of MTA, a major by-product of polyamine biosynthesis. Responsible for the first step in the methionine salvage pathway after MTA has been generated from S-adenosylmethionine. Has broad substrate specificity with 6-aminopurine nucleosides as preferred substrates. This Sclerotinia sclerotiorum (strain ATCC 18683 / 1980 / Ss-1) (White mold) protein is S-methyl-5'-thioadenosine phosphorylase.